Reading from the N-terminus, the 303-residue chain is Probable 5-dehydro-4-deoxyglucarate dehydratase (303 aa).

The protein belongs to the DapA family.

The enzyme catalyses 5-dehydro-4-deoxy-D-glucarate + H(+) = 2,5-dioxopentanoate + CO2 + H2O. Its pathway is carbohydrate acid metabolism; D-glucarate degradation; 2,5-dioxopentanoate from D-glucarate: step 2/2. This Acinetobacter baumannii (strain SDF) protein is Probable 5-dehydro-4-deoxyglucarate dehydratase.